The primary structure comprises 525 residues: Transcriptional regulatory protein TOD6 (525 aa).

The segment at 22 to 82 is disordered; the sequence is GFSILSKHPH…NNPSSWDPSD (61 aa). Positions 35–47 are enriched in polar residues; that stretch reads LVHSHSLSHTNAK. Over residues 61-71 the composition is skewed to basic and acidic residues; sequence STNKEEAESLK. Residues 67-124 form the HTH myb-type domain; that stretch reads AESLKKNNPSSWDPSDDIKLRHLKEIKNLGWKEIAHHFPNRTPNACQFRWRRLKSGNL. Residues 97–120 constitute a DNA-binding region (H-T-H motif); the sequence is WKEIAHHFPNRTPNACQFRWRRLK. S280 carries the post-translational modification Phosphoserine. The segment at 283–308 is disordered; it reads PSTQIPHSTTKTRKNSHSVISSRRSS. A compositionally biased stretch (low complexity) spans 299–308; the sequence is HSVISSRRSS. A phosphoserine mark is found at S333, S341, and S366. A disordered region spans residues 451–510; the sequence is TNEGCKDEEEEDDIDPLHKENGINTPSQQSQNYGMLEAKHDNPKSSELSSMTSANDIRNE. 2 stretches are compositionally biased toward polar residues: residues 472 to 483 and 495 to 506; these read GINTPSQQSQNY and SSELSSMTSAND.

The protein belongs to the DOT6 family. Component of the RPD3C(L) complex composed of at least ASH1, CTI6, DEP1, DOT6, PHO23, RPD3, RXT2, RXT3, SAP30, SDS3, SIN3, TOD6; UME1 and UME6.

Its subcellular location is the cytoplasm. The protein localises to the nucleus. Component of the RPD3 histone deacetylase complex RPD3C(L) responsible for the deacetylation of lysine residues on the N-terminal part of the core histones (H2A, H2B, H3 and H4). Histone deacetylation gives a tag for epigenetic repression and plays an important role in transcriptional regulation, cell cycle progression and developmental events. TOD6 binds to sequences containing the core CGATG, which resembles the PAC (Polymerase A and C) motif. The protein is Transcriptional regulatory protein TOD6 (TOD6) of Saccharomyces cerevisiae (strain ATCC 204508 / S288c) (Baker's yeast).